We begin with the raw amino-acid sequence, 309 residues long: Homoserine kinase (309 aa).

Residue 91-101 coordinates ATP; that stretch reads PVGSGLGSSAC.

The protein belongs to the GHMP kinase family. Homoserine kinase subfamily.

It is found in the cytoplasm. The enzyme catalyses L-homoserine + ATP = O-phospho-L-homoserine + ADP + H(+). It participates in amino-acid biosynthesis; L-threonine biosynthesis; L-threonine from L-aspartate: step 4/5. Functionally, catalyzes the ATP-dependent phosphorylation of L-homoserine to L-homoserine phosphate. This Hamiltonella defensa subsp. Acyrthosiphon pisum (strain 5AT) protein is Homoserine kinase.